Here is an 893-residue protein sequence, read N- to C-terminus: Alpha-actinin-1 (893 aa).

The tract at residues 1 to 248 (MDHHYDPQQT…IMTYVSSFYH (248 aa)) is actin-binding. Tyrosine 13 carries the post-translational modification Phosphotyrosine; by FAK1. 2 consecutive Calponin-homology (CH) domains span residues 32-136 (KQQR…LRFA) and 145-251 (TSAK…HAFS). 4 Spectrin repeats span residues 275–385 (QLME…WLLN), 395–500 (HLAE…ALER), 510–621 (QLYL…ALME), and 631–734 (RLRK…EVEN). EF-hand domains are found at residues 747–782 (EQMN…LGYD) and 788–823 (QGEA…ETAD). Ca(2+) contacts are provided by aspartate 760, aspartate 762, serine 764, threonine 766, and glutamate 771.

This sequence belongs to the alpha-actinin family. As to quaternary structure, homodimer; antiparallel. Interacts with PDLIM4 (via PDZ domain).

Its subcellular location is the cytoplasm. The protein localises to the cytoskeleton. It localises to the myofibril. The protein resides in the sarcomere. It is found in the z line. Its subcellular location is the cell membrane. The protein localises to the cell junction. It localises to the cell projection. The protein resides in the ruffle. In terms of biological role, F-actin cross-linking protein is thought to anchor actin to a variety of intracellular structures. This is a bundling protein. The sequence is that of Alpha-actinin-1 (ACTN1) from Gallus gallus (Chicken).